Here is a 1893-residue protein sequence, read N- to C-terminus: Nestin (1893 aa).

Residue M1 is modified to N-acetylmethionine. The head stretch occupies residues 1-7 (MEGCVGE). The coil 1A stretch occupies residues 8 to 43 (ESFQMWELNRRLEAYLTRVKTLEEQNQLLSAELGGL). Residues 8 to 314 (ESFQMWELNR…TLLEAENSRL (307 aa)) enclose the IF rod domain. The segment at 44 to 55 (RAQSGDTSWRAR) is linker 1. Positions 56–151 (ADDELASLRI…AAHEEERAHL (96 aa)) are coil 1B. Residues 150–172 (HLNAQAACAPRRPPAPPHGSPVR) form a disordered region. The interval 152–174 (NAQAACAPRRPPAPPHGSPVRAP) is linker 12. The segment at 175-193 (EVEDLARRLGEVWRGAVRD) is coil 2A. The segment at 194–196 (YQE) is linker 2. Residues 197-314 (RVAHMESSLG…TLLEAENSRL (118 aa)) are coil 2B. S312 carries the phosphoserine modification. The segment at 315-1893 (QTPGRGSQAS…DGDSWSSGED (1579 aa)) is tail. T316 is modified (phosphothreonine). Phosphoserine is present on residues S356 and S359. T389 bears the Phosphothreonine mark. 3 disordered regions span residues 437-479 (PELE…SGSR), 507-529 (NSSAQKTQESGLDTEETQDSQGP), and 556-879 (KENC…NQKS). A compositionally biased stretch (polar residues) spans 507-517 (NSSAQKTQESG). S562 carries the phosphoserine modification. Composition is skewed to basic and acidic residues over residues 572–595 (GPEKEKQIPLKSLEEKNVESEKTL) and 606–615 (LGKEDTRTED). The residue at position 620 (S620) is a Phosphoserine. Composition is skewed to basic and acidic residues over residues 634 to 646 (ESQEVVRPSKEGN) and 670 to 681 (MLERLVEKEDQS). 2 positions are modified to phosphoserine: S685 and S729. 4 stretches are compositionally biased toward basic and acidic residues: residues 717–730 (RLIEKESQESLRSP), 761–774 (RLIEKESQESLRSA), 802–818 (ILERLIEKESQESLRSP), and 846–879 (MLERLIEKESQESLKSPEENQRIGKPLERENQKS). Phosphoserine is present on S817. Position 903 is a phosphoserine (S903). Composition is skewed to basic and acidic residues over residues 949 to 966 (LLEDKTHKSLGSLEDRNG) and 989 to 1051 (QRIV…KSLE). The segment at 949–1130 (LLEDKTHKSL…ARSLGKENQE (182 aa)) is disordered. Phosphoserine is present on residues S1005 and S1049. A Glycyl lysine isopeptide (Lys-Gly) (interchain with G-Cter in SUMO1); alternate cross-link involves residue K1136. A Glycyl lysine isopeptide (Lys-Gly) (interchain with G-Cter in SUMO2); alternate cross-link involves residue K1136. Residues S1145 and S1166 each carry the phosphoserine modification. A disordered region spans residues 1155-1222 (ETAEEDLERR…ELSSLGKWNV (68 aa)). Residues 1198 to 1212 (DENRETLTSLEKESQ) show a composition bias toward basic and acidic residues. 2 positions are modified to phosphoserine: S1216 and S1229. The disordered stretch occupies residues 1237-1263 (EGLQEEQHQESLREVKQELPSSGNQQR). Residues 1241–1253 (EEQHQESLREVKQ) show a composition bias toward basic and acidic residues. A Phosphoserine modification is found at S1322. 2 disordered regions span residues 1336-1369 (DNLEGGALEVPVAQSMPEVTERDEDRAQAGEQDS) and 1388-1824 (EVVG…SEQV). Basic and acidic residues-rich tracts occupy residues 1354 to 1363 (VTERDEDRAQ) and 1393 to 1403 (EDPRHFAREEA). Composition is skewed to acidic residues over residues 1458 to 1469 (ESMEGWEEEEAS) and 1561 to 1576 (QDWEEGREESEADDLG). Phosphoserine is present on residues S1570, S1594, S1686, S1695, S1772, and S1774. Positions 1688-1709 (GFADEEESGEEGEEEDADEEGA) are enriched in acidic residues. Acidic residues predominate over residues 1773–1788 (GSEESESASLEGEEGQ). The segment covering 1815 to 1824 (QSPNLDSEQV) has biased composition (polar residues). 3 positions are modified to phosphoserine: S1866, S1889, and S1890. Positions 1870-1893 (LGPSQPLKFTLSGVDGDSWSSGED) are disordered.

It belongs to the intermediate filament family. As to quaternary structure, forms homodimers and homotetramers in vitro. In mixtures with other intermediate filament proteins such as vimentin and alpha-internexin, this protein preferentially forms heterodimers which can assemble to form intermediate filaments if nestin does not exceed 25%. Interacts with FHOD3. Constitutively phosphorylated. This increases during mitosis when the cytoplasmic intermediate filament network is reorganized. CNS stem cells.

Functionally, required for brain and eye development. Promotes the disassembly of phosphorylated vimentin intermediate filaments (IF) during mitosis and may play a role in the trafficking and distribution of IF proteins and other cellular factors to daughter cells during progenitor cell division. Required for survival, renewal and mitogen-stimulated proliferation of neural progenitor cells. The polypeptide is Nestin (Nes) (Rattus norvegicus (Rat)).